We begin with the raw amino-acid sequence, 427 residues long: Putative F-box protein At4g10740 (427 aa).

Residues 2-47 enclose the F-box domain; it reads RTTMSNLPKELVEDIVSRVPLHCLRAMRLTCKNWNALLESQSFKKM.

The chain is Putative F-box protein At4g10740 from Arabidopsis thaliana (Mouse-ear cress).